Reading from the N-terminus, the 367-residue chain is Dual specificity protein phosphatase 1 (367 aa).

Residues 20–137 form the Rhodanese domain; that stretch reads RAAQCLLLDC…FSASCPELCS (118 aa). A Tyrosine-protein phosphatase domain is found at 173–314; the sequence is GPVEILPFLY…LLQFESQVLA (142 aa). The active-site Phosphocysteine intermediate is the Cys-258. Residues Ser-359 and Ser-364 each carry the phosphoserine; by MAPK1 and MAPK3 modification.

Belongs to the protein-tyrosine phosphatase family. Non-receptor class dual specificity subfamily. Phosphorylation at Ser-359 and Ser-364 by MAPK1/ERK2 and MAPK3/ERK1 reduces its rate of degradation. Post-translationally, 'Lys-48'-linked polyubiquitinated by NEURL3, leading to proteasomal degradation. In terms of tissue distribution, expressed at high levels in the lung, liver placenta and pancreas. Moderate levels seen in the heart and skeletal muscle. Lower levels found in the brain and kidney.

The protein resides in the nucleus. It catalyses the reaction O-phospho-L-tyrosyl-[protein] + H2O = L-tyrosyl-[protein] + phosphate. The catalysed reaction is O-phospho-L-seryl-[protein] + H2O = L-seryl-[protein] + phosphate. The enzyme catalyses O-phospho-L-threonyl-[protein] + H2O = L-threonyl-[protein] + phosphate. Dual specificity phosphatase that dephosphorylates MAP kinase MAPK1/ERK2 on both 'Thr-183' and 'Tyr-185', regulating its activity during the meiotic cell cycle. The polypeptide is Dual specificity protein phosphatase 1 (Homo sapiens (Human)).